We begin with the raw amino-acid sequence, 192 residues long: Phosphoheptose isomerase (192 aa).

One can recognise an SIS domain in the interval 36–192; that stretch reads CVDSLAAGGK…DQVEAVAAPA (157 aa). 51-53 lines the substrate pocket; that stretch reads NGG. Positions 60 and 64 each coordinate Zn(2+). Residues Glu64, 93-94, 119-121, Ser124, and Gln171 contribute to the substrate site; these read ND and TTS. Zn(2+) contacts are provided by Gln171 and His179.

The protein belongs to the SIS family. GmhA subfamily. As to quaternary structure, homotetramer. It depends on Zn(2+) as a cofactor.

It is found in the cytoplasm. The enzyme catalyses 2 D-sedoheptulose 7-phosphate = D-glycero-alpha-D-manno-heptose 7-phosphate + D-glycero-beta-D-manno-heptose 7-phosphate. It functions in the pathway carbohydrate biosynthesis; D-glycero-D-manno-heptose 7-phosphate biosynthesis; D-glycero-alpha-D-manno-heptose 7-phosphate and D-glycero-beta-D-manno-heptose 7-phosphate from sedoheptulose 7-phosphate: step 1/1. Catalyzes the isomerization of sedoheptulose 7-phosphate in D-glycero-D-manno-heptose 7-phosphate. The sequence is that of Phosphoheptose isomerase from Paramagnetospirillum magneticum (strain ATCC 700264 / AMB-1) (Magnetospirillum magneticum).